Reading from the N-terminus, the 268-residue chain is Phosphatidylglycerol--prolipoprotein diacylglyceryl transferase (268 aa).

The next 7 membrane-spanning stretches (helical) occupy residues 23–43, 62–82, 97–117, 132–152, 179–199, 206–226, and 241–261; these read IGLR…RWLA, LLFN…VFFY, VWEG…AMIW, FVAP…FINL, SQLY…NIFI, ASVA…VEYV, and GQAL…WAYS. Arg-145 is a binding site for a 1,2-diacyl-sn-glycero-3-phospho-(1'-sn-glycerol).

Belongs to the Lgt family.

It is found in the cell inner membrane. It catalyses the reaction L-cysteinyl-[prolipoprotein] + a 1,2-diacyl-sn-glycero-3-phospho-(1'-sn-glycerol) = an S-1,2-diacyl-sn-glyceryl-L-cysteinyl-[prolipoprotein] + sn-glycerol 1-phosphate + H(+). It functions in the pathway protein modification; lipoprotein biosynthesis (diacylglyceryl transfer). In terms of biological role, catalyzes the transfer of the diacylglyceryl group from phosphatidylglycerol to the sulfhydryl group of the N-terminal cysteine of a prolipoprotein, the first step in the formation of mature lipoproteins. This chain is Phosphatidylglycerol--prolipoprotein diacylglyceryl transferase, found in Haemophilus influenzae (strain 86-028NP).